A 101-amino-acid chain; its full sequence is MEPVDPRLEPWKHPGSQPKTACTTCYCKKCCFHCQVCFTKKALGISYGRKKRRQRRRAPEDSQTHQVSLPKQPAPQFRGDPTGPKESKKKVERETETHPVD.

Residues 1–12 (MEPVDPRLEPWK) are compositionally biased toward basic and acidic residues. The tract at residues 1 to 20 (MEPVDPRLEPWKHPGSQPKT) is disordered. Residues 1–24 (MEPVDPRLEPWKHPGSQPKTACTT) form an interaction with human CREBBP region. Residues 1-48 (MEPVDPRLEPWKHPGSQPKTACTTCYCKKCCFHCQVCFTKKALGISYG) are transactivation. Zn(2+) is bound by residues cysteine 22, cysteine 25, and cysteine 27. Positions 22-37 (CTTCYCKKCCFHCQVC) are cysteine-rich. Position 28 is an N6-acetyllysine; by host PCAF (lysine 28). The Zn(2+) site is built by cysteine 30, histidine 33, cysteine 34, and cysteine 37. A core region spans residues 38-48 (FTKKALGISYG). Residues 47–101 (YGRKKRRQRRRAPEDSQTHQVSLPKQPAPQFRGDPTGPKESKKKVERETETHPVD) form a disordered region. Positions 49–57 (RKKRRQRRR) match the Nuclear localization signal, RNA-binding (TAR), and protein transduction motif. The interval 49–86 (RKKRRQRRRAPEDSQTHQVSLPKQPAPQFRGDPTGPKE) is interaction with the host capping enzyme RNGTT. Lysine 50 and lysine 51 each carry N6-acetyllysine; by host EP300 and GCN5L2. Arginine 52 and arginine 53 each carry asymmetric dimethylarginine; by host PRMT6. Residue lysine 71 forms a Glycyl lysine isopeptide (Lys-Gly) (interchain with G-Cter in ubiquitin) linkage. Residues 78–80 (RGD) carry the Cell attachment site motif. A compositionally biased stretch (basic and acidic residues) spans 83 to 101 (GPKESKKKVERETETHPVD).

This sequence belongs to the lentiviruses Tat family. As to quaternary structure, interacts with host CCNT1. Associates with the P-TEFb complex composed at least of Tat, P-TEFb (CDK9 and CCNT1), TAR RNA, RNA Pol II. Recruits the HATs CREBBP, TAF1/TFIID, EP300, PCAF and GCN5L2. Interacts with host KAT5/Tip60; this interaction targets the latter to degradation. Interacts with the host deacetylase SIRT1. Interacts with host capping enzyme RNGTT; this interaction stimulates RNGTT. Binds to host KDR, and to the host integrins ITGAV/ITGB3 and ITGA5/ITGB1. Interacts with host KPNB1/importin beta-1 without previous binding to KPNA1/importin alpha-1. Interacts with EIF2AK2. Interacts with host nucleosome assembly protein NAP1L1; this interaction may be required for the transport of Tat within the nucleus, since the two proteins interact at the nuclear rim. Interacts with host C1QBP/SF2P32; this interaction involves lysine-acetylated Tat. Interacts with the host chemokine receptors CCR2, CCR3 and CXCR4. Interacts with host DPP4/CD26; this interaction may trigger an anti-proliferative effect. Interacts with host LDLR. Interacts with the host extracellular matrix metalloproteinase MMP1. Interacts with host PRMT6; this interaction mediates Tat's methylation. Interacts with, and is ubiquitinated by MDM2/Hdm2. Interacts with host PSMC3 and HTATIP2. Interacts with STAB1; this interaction may overcome SATB1-mediated repression of IL2 and IL2RA (interleukin) in T cells by binding to the same domain than HDAC1. Interacts (when acetylated) with human CDK13, thereby increasing HIV-1 mRNA splicing and promoting the production of the doubly spliced HIV-1 protein Nef. Interacts with host TBP; this interaction modulates the activity of transcriptional pre-initiation complex. Interacts with host RELA. Interacts with host PLSCR1; this interaction negatively regulates Tat transactivation activity by altering its subcellular distribution. Asymmetrical arginine methylation by host PRMT6 seems to diminish the transactivation capacity of Tat and affects the interaction with host CCNT1. Post-translationally, acetylation by EP300, CREBBP, GCN5L2/GCN5 and PCAF regulates the transactivation activity of Tat. EP300-mediated acetylation of Lys-50 promotes dissociation of Tat from the TAR RNA through the competitive binding to PCAF's bromodomain. In addition, the non-acetylated Tat's N-terminus can also interact with PCAF. PCAF-mediated acetylation of Lys-28 enhances Tat's binding to CCNT1. Lys-50 is deacetylated by SIRT1. In terms of processing, polyubiquitination by host MDM2 does not target Tat to degradation, but activates its transactivation function and fosters interaction with CCNT1 and TAR RNA. Phosphorylated by EIF2AK2 on serine and threonine residues adjacent to the basic region important for TAR RNA binding and function. Phosphorylation of Tat by EIF2AK2 is dependent on the prior activation of EIF2AK2 by dsRNA.

Its subcellular location is the host nucleus. The protein resides in the host nucleolus. It is found in the host cytoplasm. The protein localises to the secreted. Transcriptional activator that increases RNA Pol II processivity, thereby increasing the level of full-length viral transcripts. Recognizes a hairpin structure at the 5'-LTR of the nascent viral mRNAs referred to as the transactivation responsive RNA element (TAR) and recruits the cyclin T1-CDK9 complex (P-TEFb complex) that will in turn hyperphosphorylate the RNA polymerase II to allow efficient elongation. The CDK9 component of P-TEFb and other Tat-activated kinases hyperphosphorylate the C-terminus of RNA Pol II that becomes stabilized and much more processive. Other factors such as HTATSF1/Tat-SF1, SUPT5H/SPT5, and HTATIP2 are also important for Tat's function. Besides its effect on RNA Pol II processivity, Tat induces chromatin remodeling of proviral genes by recruiting the histone acetyltransferases (HATs) CREBBP, EP300 and PCAF to the chromatin. This also contributes to the increase in proviral transcription rate, especially when the provirus integrates in transcriptionally silent region of the host genome. To ensure maximal activation of the LTR, Tat mediates nuclear translocation of NF-kappa-B by interacting with host RELA. Through its interaction with host TBP, Tat may also modulate transcription initiation. Tat can reactivate a latently infected cell by penetrating in it and transactivating its LTR promoter. In the cytoplasm, Tat is thought to act as a translational activator of HIV-1 mRNAs. In terms of biological role, extracellular circulating Tat can be endocytosed by surrounding uninfected cells via the binding to several surface receptors such as CD26, CXCR4, heparan sulfate proteoglycans (HSPG) or LDLR. Neurons are rarely infected, but they internalize Tat via their LDLR. Through its interaction with nuclear HATs, Tat is potentially able to control the acetylation-dependent cellular gene expression. Modulates the expression of many cellular genes involved in cell survival, proliferation or in coding for cytokines or cytokine receptors. Tat plays a role in T-cell and neurons apoptosis. Tat induced neurotoxicity and apoptosis probably contribute to neuroAIDS. Circulating Tat also acts as a chemokine-like and/or growth factor-like molecule that binds to specific receptors on the surface of the cells, affecting many cellular pathways. In the vascular system, Tat binds to ITGAV/ITGB3 and ITGA5/ITGB1 integrins dimers at the surface of endothelial cells and competes with bFGF for heparin-binding sites, leading to an excess of soluble bFGF. The polypeptide is Protein Tat (Human immunodeficiency virus type 1 group M subtype B (isolate MN) (HIV-1)).